Consider the following 81-residue polypeptide: Small ribosomal subunit protein bS16 (81 aa).

The protein belongs to the bacterial ribosomal protein bS16 family.

The protein is Small ribosomal subunit protein bS16 of Clostridium beijerinckii (strain ATCC 51743 / NCIMB 8052) (Clostridium acetobutylicum).